The following is a 382-amino-acid chain: ATP phosphoribosyltransferase regulatory subunit (382 aa).

This sequence belongs to the class-II aminoacyl-tRNA synthetase family. HisZ subfamily. Heteromultimer composed of HisG and HisZ subunits.

The protein resides in the cytoplasm. It functions in the pathway amino-acid biosynthesis; L-histidine biosynthesis; L-histidine from 5-phospho-alpha-D-ribose 1-diphosphate: step 1/9. In terms of biological role, required for the first step of histidine biosynthesis. May allow the feedback regulation of ATP phosphoribosyltransferase activity by histidine. This Burkholderia ambifaria (strain MC40-6) protein is ATP phosphoribosyltransferase regulatory subunit.